The primary structure comprises 319 residues: MFRFDKEQMVIDFAGAKFGGQPGEYPTALSGTIFYARHKIVEDAKKGIFDKKAAEALINKQAEMQDITGNSALVQVFGGTEEALVNYIDFVSEVWEGPMLLDSTSGKARMAAAKRATEAGYAKQCIYNSINVSIDEEEFQSLAESDVEASIVLCFDPMDPSVEGKLNVLNNGGKTKDVGMLDLAEKAGIKYPLIDVAVTPMGAGAGNAVRASFAVKAKLGLAVGSGIHNVPSAWDWLREFRKGLREEGKEQIAKDVHHVCDIGANIVQTMASGDFVLYGPIDNAELAFPAVAMTDMIIAETAKELGTTPAAVHPLNKLI.

This sequence belongs to the MtrH family. The complex is composed of 8 subunits; MtrA, MtrB, MtrC, MtrD, MtrE, MtrF, MtrG and MtrH.

It catalyses the reaction 5-methyl-5,6,7,8-tetrahydromethanopterin + coenzyme M + 2 Na(+)(in) = 5,6,7,8-tetrahydromethanopterin + methyl-coenzyme M + 2 Na(+)(out). Its pathway is one-carbon metabolism; methanogenesis from CO(2); methyl-coenzyme M from 5,10-methylene-5,6,7,8-tetrahydromethanopterin: step 2/2. Its function is as follows. Part of a complex that catalyzes the formation of methyl-coenzyme M and tetrahydromethanopterin from coenzyme M and methyl-tetrahydromethanopterin. This is an energy-conserving, sodium-ion translocating step. MtrH catalyzes the transfer of the methyl group from methyl-tetrahydromethanopterin to the corrinoid prosthetic group of MtrA. The protein is Tetrahydromethanopterin S-methyltransferase subunit H of Methanococcus vannielii (strain ATCC 35089 / DSM 1224 / JCM 13029 / OCM 148 / SB).